The following is a 306-amino-acid chain: MSDLHSSPTDQTSAPAHAGGGNRVVIVTGMSGAGKTMALKALEDMGWEAVDNLPLALAASLVRSGGGMARPLALGVDIRTRDFGVEPVLAALDHLMGESGLDVRLLFLDCEDDVLCRRFTETRRRHPMAVDRPLLDGIRHERALVSPLKRRADVMIDTTNQPPGEFKRLLAGHFGLESNGGLGVFVTSFAYRNGLPREADLVFDARFLANPHYVPELKPLTGRDPAVAQYVAADPAFGPFIESLTRLLEPLLPRFAAEGKSYLTIAVGCTGGRHRSVAIAEHLAQWMQRRGGKVELRHRELDERGS.

Polar residues predominate over residues 1–14; that stretch reads MSDLHSSPTDQTSA. The interval 1-20 is disordered; it reads MSDLHSSPTDQTSAPAHAGG. An ATP-binding site is contributed by 29-36; the sequence is GMSGAGKT. Position 77 to 80 (77 to 80) interacts with GTP; the sequence is DIRT.

The protein belongs to the RapZ-like family.

Displays ATPase and GTPase activities. The polypeptide is Nucleotide-binding protein amb4396 (Paramagnetospirillum magneticum (strain ATCC 700264 / AMB-1) (Magnetospirillum magneticum)).